Here is a 161-residue protein sequence, read N- to C-terminus: SsrA-binding protein (161 aa).

A disordered region spans residues 138-161; that stretch reads DKRTDSKEKDWNRDKARIMKSSLR. The segment covering 139 to 154 has biased composition (basic and acidic residues); the sequence is KRTDSKEKDWNRDKAR.

It belongs to the SmpB family.

It localises to the cytoplasm. Required for rescue of stalled ribosomes mediated by trans-translation. Binds to transfer-messenger RNA (tmRNA), required for stable association of tmRNA with ribosomes. tmRNA and SmpB together mimic tRNA shape, replacing the anticodon stem-loop with SmpB. tmRNA is encoded by the ssrA gene; the 2 termini fold to resemble tRNA(Ala) and it encodes a 'tag peptide', a short internal open reading frame. During trans-translation Ala-aminoacylated tmRNA acts like a tRNA, entering the A-site of stalled ribosomes, displacing the stalled mRNA. The ribosome then switches to translate the ORF on the tmRNA; the nascent peptide is terminated with the 'tag peptide' encoded by the tmRNA and targeted for degradation. The ribosome is freed to recommence translation, which seems to be the essential function of trans-translation. The sequence is that of SsrA-binding protein from Aliivibrio fischeri (strain ATCC 700601 / ES114) (Vibrio fischeri).